A 341-amino-acid polypeptide reads, in one-letter code: 2-dehydro-3-deoxy-L-galactonate 5-dehydrogenase (341 aa).

Residue Cys37 coordinates Zn(2+). Catalysis depends on charge relay system residues Thr39 and His42. Zn(2+) is bound by residues His60, Glu61, Cys90, Cys93, Cys96, and Cys104.

It belongs to the zinc-containing alcohol dehydrogenase family. Zn(2+) serves as cofactor.

The enzyme catalyses 2-dehydro-3-deoxy-L-galactonate + NAD(+) = 3-deoxy-D-glycero-2,5-hexodiulosonate + NADH + H(+). Its function is as follows. Involved in the degradation of 3,6-anhydro-L-galactose, which is the major monomeric sugar of red macroalgae. Catalyzes the third step of the pathway, the NAD(+)-dependent oxidation of 2-dehydro-3-deoxy-L-galactonate (L-KDGal) to 3-deoxy-D-glycero-2,5-hexodiulosonate (L-DDGal). This is 2-dehydro-3-deoxy-L-galactonate 5-dehydrogenase from Pseudoalteromonas atlantica (strain T6c / ATCC BAA-1087).